We begin with the raw amino-acid sequence, 274 residues long: Cytochrome b-c1 complex subunit Rieske, mitochondrial (274 aa).

Topologically, residues 79–103 are mitochondrial matrix; it reads SHTDVKVPDFSEYRRLEVLDSTKSS. The chain crosses the membrane as a helical span at residues 104-140; the sequence is RESSEARKGFSYLVTGVTTVGVAYAAKNAVTQFVSSM. The Mitochondrial intermembrane portion of the chain corresponds to 141 to 274; sequence SASADVLALA…FTSDDMVIVG (134 aa). The 86-residue stretch at 187–272 folds into the Rieske domain; that stretch reads EAAVELSQLR…YEFTSDDMVI (86 aa). [2Fe-2S] cluster-binding residues include Cys217, His219, Cys236, His239, and Ser241. The cysteines at positions 222 and 238 are disulfide-linked.

It belongs to the Rieske iron-sulfur protein family. As to quaternary structure, component of the ubiquinol-cytochrome c oxidoreductase (cytochrome b-c1 complex, complex III, CIII), a multisubunit enzyme composed of 11 subunits. The complex is composed of 3 respiratory subunits cytochrome b, cytochrome c1 and Rieske protein UQCRFS1, 2 core protein subunits UQCRC1/QCR1 and UQCRC2/QCR2, and 6 low-molecular weight protein subunits UQCRH/QCR6, UQCRB/QCR7, UQCRQ/QCR8, UQCR10/QCR9, UQCR11/QCR10 and subunit 9, the cleavage product of Rieske protein UQCRFS1. The complex exists as an obligatory dimer and forms supercomplexes (SCs) in the inner mitochondrial membrane with NADH-ubiquinone oxidoreductase (complex I, CI) and cytochrome c oxidase (complex IV, CIV), resulting in different assemblies (supercomplex SCI(1)III(2)IV(1) and megacomplex MCI(2)III(2)IV(2)). Incorporation of the Rieske protein UQCRFS1 is the penultimate step in complex III assembly. Interacts with TTC19, which is involved in the clearance of UQCRFS1 fragments. In terms of assembly, component of the ubiquinol-cytochrome c oxidoreductase (cytochrome b-c1 complex, complex III, CIII). Subunit 9 corresponds to the mitochondrial targeting sequence (MTS) of Rieske protein UQCRFS1. It is retained after processing and incorporated inside complex III, where it remains bound to the complex and localizes between the 2 core subunits UQCRC1/QCR1 and UQCRC2/QCR2. Requires [2Fe-2S] cluster as cofactor. Proteolytic processing is necessary for the correct insertion of UQCRFS1 in the complex III dimer. Several fragments are generated during UQCRFS1 insertion, most probably due to the endogenous matrix-processing peptidase (MPP) activity of the 2 core protein subunits UQCRC1/QCR1 and UQCRC2/QCR2, which are homologous to the 2 mitochondrial-processing peptidase (MPP) subunits beta-MPP and alpha-MPP respectively. The action of the protease is also necessary for the clearance of the UQCRFS1 fragments.

The protein localises to the mitochondrion inner membrane. The enzyme catalyses a quinol + 2 Fe(III)-[cytochrome c](out) = a quinone + 2 Fe(II)-[cytochrome c](out) + 2 H(+)(out). Its function is as follows. Component of the ubiquinol-cytochrome c oxidoreductase, a multisubunit transmembrane complex that is part of the mitochondrial electron transport chain which drives oxidative phosphorylation. The respiratory chain contains 3 multisubunit complexes succinate dehydrogenase (complex II, CII), ubiquinol-cytochrome c oxidoreductase (cytochrome b-c1 complex, complex III, CIII) and cytochrome c oxidase (complex IV, CIV), that cooperate to transfer electrons derived from NADH and succinate to molecular oxygen, creating an electrochemical gradient over the inner membrane that drives transmembrane transport and the ATP synthase. The cytochrome b-c1 complex catalyzes electron transfer from ubiquinol to cytochrome c, linking this redox reaction to translocation of protons across the mitochondrial inner membrane, with protons being carried across the membrane as hydrogens on the quinol. In the process called Q cycle, 2 protons are consumed from the matrix, 4 protons are released into the intermembrane space and 2 electrons are passed to cytochrome c. The Rieske protein is a catalytic core subunit containing a [2Fe-2S] iron-sulfur cluster. It cycles between 2 conformational states during catalysis to transfer electrons from the quinol bound in the Q(0) site in cytochrome b to cytochrome c1. Incorporation of UQCRFS1 is the penultimate step in complex III assembly. In terms of biological role, component of the ubiquinol-cytochrome c oxidoreductase (cytochrome b-c1 complex, complex III, CIII). UQCRFS1 undergoes proteolytic processing once it is incorporated in the complex III dimer. One of the fragments, called subunit 9, corresponds to its mitochondrial targeting sequence (MTS). The proteolytic processing is necessary for the correct insertion of UQCRFS1 in the complex III dimer, but the persistence of UQCRFS1-derived fragments may prevent newly imported UQCRFS1 to be processed and assembled into complex III and is detrimental for the complex III structure and function. This Pan paniscus (Pygmy chimpanzee) protein is Cytochrome b-c1 complex subunit Rieske, mitochondrial (UQCRFS1).